Here is a 344-residue protein sequence, read N- to C-terminus: Ureide permease 3 (344 aa).

The Extracellular portion of the chain corresponds to 1–10; it reads MYVIESKGGT. A helical membrane pass occupies residues 11–31; the sequence is ITCMLLALLFLGTWPAIMTLT. Residues 32-42 are Cytoplasmic-facing; sequence ERRGRLPQHTY. Residues 43 to 63 form a helical membrane-spanning segment; that stretch reads LDYTLTNLLAAVIIAFTLGEI. At 64–78 the chain is on the extracellular side; sequence SPSRPNFTTQLSQDN. The chain crosses the membrane as a helical span at residues 79–99; that stretch reads WPSVMFAMAGGIFLSLGTLAT. Topologically, residues 100–101 are cytoplasmic; sequence QY. Residues 102 to 122 traverse the membrane as a helical segment; sequence AWAFVGLSVTEVITASIAVVI. The Extracellular segment spans residues 123–136; it reads GTTLNYFLDDRINR. Residues 137–157 traverse the membrane as a helical segment; that stretch reads AEVLFPGVACFLIAVCFGSAV. The Cytoplasmic segment spans residues 158–208; it reads HKSNAADNKSKLQGFKSLETTSSFQMETSSIKEGKAKVGTADFLIEVEKQR. 209 to 216 is an ATP binding site; it reads AIKVFGKS. A helical membrane pass occupies residues 209–229; that stretch reads AIKVFGKSTIIGLAITFFAVP. At 230-235 the chain is on the extracellular side; the sequence is KLNVYT. The helical transmembrane segment at 236-256 threads the bilayer; that stretch reads AFFYFSISSFGVGLILNIIFL. The Cytoplasmic segment spans residues 257–278; it reads YWPILGLPRSSFKAYLNDWNGR. A helical transmembrane segment spans residues 279–299; it reads GWSFLAGFLCGFGNGLQFMGG. The Extracellular portion of the chain corresponds to 300–344; the sequence is QAAGYAAAGAVQIENKHFGGYCCLENTKDHQEKHIHFLSVCYLCS.

It belongs to the plant ureide permease (TC 2.A.7.19) family.

It localises to the membrane. Its function is as follows. Proton-coupled transporter that transports a wide spectrum of oxo derivatives of heterocyclic nitrogen compounds. This chain is Ureide permease 3, found in Arabidopsis thaliana (Mouse-ear cress).